The sequence spans 301 residues: Phosphatidylglycerol--prolipoprotein diacylglyceryl transferase (301 aa).

Transmembrane regions (helical) follow at residues 17 to 37 (LAVR…IVVG), 59 to 79 (MLFY…VLFY), 97 to 117 (GGMS…LFAW), 129 to 149 (FVAP…FING), 203 to 223 (PSQL…LWLF), 230 to 250 (VGAA…TVEF), and 257 to 277 (FLGL…PMII). Arginine 142 contributes to the a 1,2-diacyl-sn-glycero-3-phospho-(1'-sn-glycerol) binding site.

This sequence belongs to the Lgt family.

It is found in the cell inner membrane. The enzyme catalyses L-cysteinyl-[prolipoprotein] + a 1,2-diacyl-sn-glycero-3-phospho-(1'-sn-glycerol) = an S-1,2-diacyl-sn-glyceryl-L-cysteinyl-[prolipoprotein] + sn-glycerol 1-phosphate + H(+). It functions in the pathway protein modification; lipoprotein biosynthesis (diacylglyceryl transfer). Its function is as follows. Catalyzes the transfer of the diacylglyceryl group from phosphatidylglycerol to the sulfhydryl group of the N-terminal cysteine of a prolipoprotein, the first step in the formation of mature lipoproteins. The sequence is that of Phosphatidylglycerol--prolipoprotein diacylglyceryl transferase from Paraburkholderia phymatum (strain DSM 17167 / CIP 108236 / LMG 21445 / STM815) (Burkholderia phymatum).